Consider the following 394-residue polypeptide: uncharacterized protein (394 aa).

The next 8 membrane-spanning stretches (helical) occupy residues 22 to 42, 60 to 80, 81 to 101, 231 to 251, 271 to 291, 303 to 323, 328 to 348, and 355 to 375; these read VLVSLFGVSLLLLCLAGVLLH, LALFDLHGLIGIWGLPWLLLF, GFTGALSGLGALGTLLLAPVA, LHLAMGLGACLLCASGLYLWL, GFCAGLVAAAALLLLGLQLAP, LFLVLWAAAGLAALLLPGDWP, LLGVAGLACLAAAVAHLAPWL, and ALGPDLTLILCGALLIRHAWM.

It is found in the cell membrane. This is an uncharacterized protein from Pseudomonas aeruginosa (strain ATCC 15692 / DSM 22644 / CIP 104116 / JCM 14847 / LMG 12228 / 1C / PRS 101 / PAO1).